Here is a 98-residue protein sequence, read N- to C-terminus: MNNINDLRLNNNISNTNKSQNSTGIGDEFAKMLKNEINDLNKAQESGEAAMTDIATGQVKDLHQAAIAITKAESSMKFMLEVRNKAISAYKEITRTQI.

A compositionally biased stretch (low complexity) spans 1 to 23; it reads MNNINDLRLNNNISNTNKSQNST. Positions 1–24 are disordered; that stretch reads MNNINDLRLNNNISNTNKSQNSTG.

It belongs to the FliE family.

Its subcellular location is the bacterial flagellum basal body. This Campylobacter jejuni subsp. jejuni serotype O:2 (strain ATCC 700819 / NCTC 11168) protein is Flagellar hook-basal body complex protein FliE.